Reading from the N-terminus, the 120-residue chain is NAD(P)H-quinone oxidoreductase subunit 3 (120 aa).

3 helical membrane-spanning segments follow: residues 11–31 (LIFL…SYLI), 64–84 (MFAL…PWAV), and 89–109 (LGLL…VALV).

This sequence belongs to the complex I subunit 3 family. In terms of assembly, NDH-1 can be composed of about 15 different subunits; different subcomplexes with different compositions have been identified which probably have different functions.

The protein resides in the cell inner membrane. The enzyme catalyses a plastoquinone + NADH + (n+1) H(+)(in) = a plastoquinol + NAD(+) + n H(+)(out). It carries out the reaction a plastoquinone + NADPH + (n+1) H(+)(in) = a plastoquinol + NADP(+) + n H(+)(out). Its function is as follows. NDH-1 shuttles electrons from an unknown electron donor, via FMN and iron-sulfur (Fe-S) centers, to quinones in the respiratory and/or the photosynthetic chain. The immediate electron acceptor for the enzyme in this species is believed to be plastoquinone. Couples the redox reaction to proton translocation, and thus conserves the redox energy in a proton gradient. Cyanobacterial NDH-1 also plays a role in inorganic carbon-concentration. This Gloeobacter violaceus (strain ATCC 29082 / PCC 7421) protein is NAD(P)H-quinone oxidoreductase subunit 3.